The following is a 213-amino-acid chain: Thymidylate kinase (213 aa).

Position 10-17 (10-17) interacts with ATP; that stretch reads GIDGCGKT.

It belongs to the thymidylate kinase family.

The catalysed reaction is dTMP + ATP = dTDP + ADP. Its function is as follows. Phosphorylation of dTMP to form dTDP in both de novo and salvage pathways of dTTP synthesis. This chain is Thymidylate kinase, found in Synechococcus sp. (strain WH7803).